The following is a 416-amino-acid chain: Phosphatidylinositol 5-phosphate 4-kinase type-2 gamma (416 aa).

A PIPK domain is found at 38-415 (ASDPMLSVFM…RFREFISNIF (378 aa)).

Phosphorylated, phosphorylation is induced by EGF.

It localises to the endoplasmic reticulum. Its subcellular location is the cytoplasm. The enzyme catalyses a 1,2-diacyl-sn-glycero-3-phospho-(1D-myo-inositol-5-phosphate) + ATP = a 1,2-diacyl-sn-glycero-3-phospho-(1D-myo-inositol-4,5-bisphosphate) + ADP + H(+). It carries out the reaction 1,2-dihexadecanoyl-sn-glycero-3-phospho-(1D-myo-inositol-5-phosphate) + ATP = 1,2-dihexadecanoyl-sn-glycero-3-phospho-(1D-myo-inositol-4,5-bisphosphate) + ADP + H(+). It catalyses the reaction 1,2-dihexadecanoyl-sn-glycero-3-phospho-(1D-myo-inositol-5-phosphate) + GTP = 1,2-dihexadecanoyl-sn-glycero-3-phospho-(1D-myo-inositol-4,5-bisphosphate) + GDP + H(+). Functionally, phosphatidylinositol 5-phosphate 4-kinase with low enzymatic activity. May be a GTP sensor, has higher GTP-dependent kinase activity than ATP-dependent kinase activity. This Danio rerio (Zebrafish) protein is Phosphatidylinositol 5-phosphate 4-kinase type-2 gamma (pip4k2c).